The following is a 332-amino-acid chain: Chitin synthase export chaperone (332 aa).

Helical transmembrane passes span 51–71 (CANDFMHILAMVMTVIMIIHV), 86–106 (VFYIYLLLTIISLILDAGVTA), 121–141 (GLVSALCTCLLINGFVGFQLY), 149–169 (VWLLRLCSLAMFVVSGAVSLL), 182–202 (PIGIMIVTYIVNAIFLFVYVV), 218–238 (LGDISFGVFFFVIGQVILYVF), and 248–268 (HYIDGLFFATICNLLAVMMVY).

Belongs to the CHS7 family. Interacts with CHS3.

It localises to the endoplasmic reticulum membrane. Its function is as follows. Chaperone required for the export of the chitin synthase CHS3 from the endoplasmic reticulum. The polypeptide is Chitin synthase export chaperone (CHS7) (Phaeosphaeria nodorum (strain SN15 / ATCC MYA-4574 / FGSC 10173) (Glume blotch fungus)).